Reading from the N-terminus, the 262-residue chain is Phosphate import ATP-binding protein PstB (262 aa).

Residues 16–257 (IDVRNLNFYY…PHRKETEDYI (242 aa)) enclose the ABC transporter domain. Residue 48 to 55 (GPSGCGKS) participates in ATP binding.

This sequence belongs to the ABC transporter superfamily. Phosphate importer (TC 3.A.1.7) family. In terms of assembly, the complex is composed of two ATP-binding proteins (PstB), two transmembrane proteins (PstC and PstA) and a solute-binding protein (PstS).

The protein localises to the cell inner membrane. It carries out the reaction phosphate(out) + ATP + H2O = ADP + 2 phosphate(in) + H(+). In terms of biological role, part of the ABC transporter complex PstSACB involved in phosphate import. Responsible for energy coupling to the transport system. This is Phosphate import ATP-binding protein PstB from Cupriavidus metallidurans (strain ATCC 43123 / DSM 2839 / NBRC 102507 / CH34) (Ralstonia metallidurans).